A 323-amino-acid chain; its full sequence is Aquaporin-4 (323 aa).

The Cytoplasmic segment spans residues 1–36 (MSDRPTARRWGKCGPLCTRENIMVAFKGVWTQAFWK). S-palmitoyl cysteine attachment occurs at residues Cys13 and Cys17. The helical transmembrane segment at 37–57 (AVTAEFLAMLIFVLLSLGSTI) threads the bilayer. Over 58-69 (NWGGTEKPLPVD) the chain is Extracellular. The chain crosses the membrane as a helical span at residues 70–89 (MVLISLCFGLSIATMVQCFG). Residues 90–93 (HISG) lie on the Cytoplasmic side of the membrane. Positions 94–101 (GHINPAVT) form an intramembrane region, discontinuously helical. The NPA 1 motif lies at 97–99 (NPA). Topologically, residues 102 to 115 (VAMVCTRKISIAKS) are cytoplasmic. Ser111 carries the post-translational modification Phosphoserine; by PKG. The chain crosses the membrane as a helical span at residues 116–136 (VFYIAAQCLGAIIGAGILYLV). Over 137–155 (TPPSVVGGLGVTMVHGNLT) the chain is Extracellular. A glycan (N-linked (GlcNAc...) asparagine) is linked at Asn153. The chain crosses the membrane as a helical span at residues 156–176 (AGHGLLVELIITFQLVFTIFA). Over 177–184 (SCDSKRTD) the chain is Cytoplasmic. Position 180 is a phosphoserine; by PKC (Ser180). The chain crosses the membrane as a helical span at residues 185–205 (VTGSIALAIGFSVAIGHLFAI). The N-linked (GlcNAc...) asparagine glycan is linked to Asn206. The Extracellular portion of the chain corresponds to 206-208 (NYT). Residues 209–222 (GASMNPARSFGPAV) constitute an intramembrane region (discontinuously helical). Positions 213 to 215 (NPA) match the NPA 2 motif. Over 223–231 (IMGNWENHW) the chain is Extracellular. Residues 232–252 (IYWVGPIIGAVLAGGLYEYVF) form a helical membrane-spanning segment. The Cytoplasmic portion of the chain corresponds to 253–323 (CPDVEFKRRF…DQSGEVLSSV (71 aa)). Residues Ser276 and Ser285 each carry the phosphoserine modification. Thr289 is subject to Phosphothreonine. Position 321 is a phosphoserine (Ser321).

This sequence belongs to the MIP/aquaporin (TC 1.A.8) family. In terms of assembly, homotetramer. The tetramers can form oligomeric arrays in membranes. The size of the oligomers differs between tissues and is smaller in skeletal muscle than in brain. Interaction between AQP4 oligomeric arrays in close-by cells can contribute to cell-cell adhesion. Part of a complex containing MLC1, TRPV4, HEPACAM and ATP1B1. Phosphorylation by PKC at Ser-180 reduces conductance by 50%. Phosphorylation by PKG at Ser-111 in response to glutamate increases conductance by 40%. In terms of processing, isoform 2: Palmitoylated on its N-terminal region. Isoform 1: Not palmitoylated. As to expression, detected in skeletal muscle. Detected in stomach, along the glandular base region of the fundic gland (at protein level). Detected in brain, lung and skeletal muscle, and at much lower levels in heart and ovary.

The protein resides in the cell membrane. It is found in the basolateral cell membrane. Its subcellular location is the endosome membrane. It localises to the sarcolemma. The protein localises to the cell projection. It carries out the reaction H2O(in) = H2O(out). Forms a water-specific channel. Plays an important role in brain water homeostasis. It is involved in glymphatic solute transport and is required for a normal rate of water exchange across the blood brain interface. Required for normal levels of cerebrospinal fluid influx into the brain cortex and parenchyma along paravascular spaces that surround penetrating arteries, and for normal drainage of interstitial fluid along paravenous drainage pathways. Thereby, it is required for normal clearance of solutes from the brain interstitial fluid, including soluble beta-amyloid peptides derived from APP. Plays a redundant role in urinary water homeostasis and urinary concentrating ability. The polypeptide is Aquaporin-4 (AQP4) (Homo sapiens (Human)).